The primary structure comprises 496 residues: Maturase K (496 aa).

The protein belongs to the intron maturase 2 family. MatK subfamily.

It is found in the plastid. The protein resides in the chloroplast. Its function is as follows. Usually encoded in the trnK tRNA gene intron. Probably assists in splicing its own and other chloroplast group II introns. This Paeonia suffruticosa (Tree peony) protein is Maturase K.